A 399-amino-acid chain; its full sequence is Phosphoglycerate kinase (399 aa).

Substrate-binding positions include 22 to 24 (DFN), Arg-38, 61 to 64 (HLGR), Arg-120, and Arg-153. ATP-binding positions include Lys-204, Glu-326, and 352 to 355 (GGDT).

This sequence belongs to the phosphoglycerate kinase family. In terms of assembly, monomer.

The protein resides in the cytoplasm. The catalysed reaction is (2R)-3-phosphoglycerate + ATP = (2R)-3-phospho-glyceroyl phosphate + ADP. The protein operates within carbohydrate degradation; glycolysis; pyruvate from D-glyceraldehyde 3-phosphate: step 2/5. The polypeptide is Phosphoglycerate kinase (Geobacter sp. (strain M21)).